The sequence spans 96 residues: LLVPLVTFHLILGMGTLDHGGALTERRSADATALKPEPVLLQKSDARSTDDNDKDRLTQMKRILKKRGNKARGEEEHSKYQECLREIRVNNVQQEC.

The first 24 residues, 1–24 (LLVPLVTFHLILGMGTLDHGGALT), serve as a signal peptide directing secretion. Residues 25-72 (ERRSADATALKPEPVLLQKSDARSTDDNDKDRLTQMKRILKKRGNKAR) constitute a propeptide that is removed on maturation. The segment at 28–57 (SADATALKPEPVLLQKSDARSTDDNDKDRL) is disordered. A compositionally biased stretch (basic and acidic residues) spans 44–57 (SDARSTDDNDKDRL). 4-carboxyglutamate is present on residues glutamate 75, glutamate 76, glutamate 82, glutamate 86, and glutamate 95. Positions 82 and 86 each coordinate a divalent metal cation. The cysteines at positions 83 and 96 are disulfide-linked.

Belongs to the conotoxin B superfamily. In terms of tissue distribution, expressed by the venom duct.

It localises to the secreted. Functionally, conantokins inhibit N-methyl-D-aspartate (NMDA) receptors. This toxin has the highest potency for the NR2B/GRIN2B subunit, followed by NR2A/GRIN2A, NR2C/GRIN2C, and NR2D/GRIN2D subunits. This Conus ermineus (Agate cone) protein is Conantokin-E.